The chain runs to 79 residues: U24-theraphotoxin-Cg1a (79 aa).

An N-terminal signal peptide occupies residues Met-1–Ala-19. Positions Ser-20 to Arg-44 are excised as a propeptide. Disulfide bonds link Cys-46–Cys-61, Cys-53–Cys-66, and Cys-60–Cys-73. Trp-78 carries the tryptophan amide modification.

It belongs to the neurotoxin 10 (Hwtx-1) family. 35 (Jztx-27) subfamily. Expressed by the venom gland.

The protein resides in the secreted. Its function is as follows. Probable ion channel inhibitor. The chain is U24-theraphotoxin-Cg1a from Chilobrachys guangxiensis (Chinese earth tiger tarantula).